Consider the following 718-residue polypeptide: Methionine--tRNA ligase (718 aa).

Positions Pro-27–His-37 match the 'HIGH' region motif. Residues Cys-158, Cys-161, Cys-171, and Cys-174 each coordinate Zn(2+). Positions Lys-348–Ser-352 match the 'KMSKS' region motif. Position 351 (Lys-351) interacts with ATP. One can recognise a tRNA-binding domain in the interval Asp-612–Lys-718.

It belongs to the class-I aminoacyl-tRNA synthetase family. MetG type 1 subfamily. As to quaternary structure, homodimer. Zn(2+) is required as a cofactor.

It is found in the cytoplasm. It catalyses the reaction tRNA(Met) + L-methionine + ATP = L-methionyl-tRNA(Met) + AMP + diphosphate. In terms of biological role, is required not only for elongation of protein synthesis but also for the initiation of all mRNA translation through initiator tRNA(fMet) aminoacylation. In Burkholderia cenocepacia (strain ATCC BAA-245 / DSM 16553 / LMG 16656 / NCTC 13227 / J2315 / CF5610) (Burkholderia cepacia (strain J2315)), this protein is Methionine--tRNA ligase.